A 540-amino-acid chain; its full sequence is Sterol O-acyltransferase 1 (540 aa).

The disordered stretch occupies residues 1–20 (MSLRNRLSKSGENPEQDEAQ). Over 1–128 (MSLRNRLSKS…LDELFEVDHI (128 aa)) the chain is Cytoplasmic. Residue serine 2 is modified to Phosphoserine. Position 127 (histidine 127) interacts with cholesterol. The helical transmembrane segment at 129-150 (RTIYHMFIALLILFVLSTIVVD) threads the bilayer. Over 151-170 (YIDEGRLVLEFNLLAYAFGK) the chain is Lumenal. A helical membrane pass occupies residues 171-196 (FPTVIWTWWAMFLSTLSIPYFLFQRW). Topologically, residues 197 to 208 (AHGYSKSSHPLI) are cytoplasmic. The chain crosses the membrane as a helical span at residues 209-234 (YSLVHGLLFLVFQLGVLGFVPTYVVL). At 235–242 (AYTLPPAS) the chain is on the lumenal side. The helical transmembrane segment at 243 to 266 (RFILILEQIRLIMKAHSFVRENIP) threads the bilayer. Residues 267–309 (RVLNAAKEKSSKDPLPTVNQYLYFLFAPTLIYRDNYPRTPTVR) lie on the Cytoplasmic side of the membrane. The chain crosses the membrane as a helical span at residues 310–342 (WGYVAMQFLQVFGCLFYVYYIFERLCAPLFRNI). The Lumenal segment spans residues 343 to 359 (KQEPFSARVLVLCVFNS). A helical transmembrane segment spans residues 360–385 (ILPGVLILFLSFFAFLHCWLNAFAEM). At 386–433 (LRFGDRMFYKDWWNSTSYSNYYRTWNVVVHDWLYYYVYKDLLWFFSKR) the chain is on the cytoplasmic side. Residues 393–399 (FYKDWWN) carry the FYXDWWN motif motif. An acyl-CoA contacts are provided by asparagine 405, arginine 408, asparagine 411, histidine 415, tyrosine 423, lysine 435, and serine 446. A helical transmembrane segment spans residues 434 to 458 (FKSAAMLAVFALSAVVHEYALAICL). Histidine 450 is a catalytic residue. Residues 459-464 (SYFYPV) lie on the Lumenal side of the membrane. The helical transmembrane segment at 465 to 480 (LFVLFMFFGMAFNFIV) threads the bilayer. The Cytoplasmic portion of the chain corresponds to 481–486 (NDSRKR). A helical transmembrane segment spans residues 487–518 (PIWNIMVWASLFLGYGLILCFYSQEWYARQHC). Cysteine 518 and cysteine 536 form a disulfide bridge. The Lumenal segment spans residues 519-540 (PLKNPTFLDYVRPRTWTCRYVF).

It belongs to the membrane-bound acyltransferase family. Sterol o-acyltransferase subfamily. May form homo- or heterodimers. Interacts with UBIAD1.

It is found in the endoplasmic reticulum membrane. It catalyses the reaction a sterol + a long-chain fatty acyl-CoA = a long-chain 3-hydroxysterol ester + CoA. The catalysed reaction is cholesterol + an acyl-CoA = a cholesterol ester + CoA. The enzyme catalyses cholesterol + (9Z)-octadecenoyl-CoA = cholesteryl (9Z-octadecenoate) + CoA. It carries out the reaction cholesterol + hexadecanoyl-CoA = cholesteryl hexadecanoate + CoA. It catalyses the reaction octadecanoyl-CoA + cholesterol = cholesteryl octadecanoate + CoA. The catalysed reaction is (9Z,12Z)-octadecadienoyl-CoA + cholesterol = cholesteryl (9Z,12Z)-octadecadienoate + CoA. The enzyme catalyses (5Z,8Z,11Z,14Z)-eicosatetraenoyl-CoA + cholesterol = cholesteryl (5Z,8Z,11Z,14Z)-eicosatetraenoate + CoA. It carries out the reaction (9Z)-hexadecenoyl-CoA + cholesterol = cholesteryl (9Z)-hexadecenoate + CoA. It catalyses the reaction (11Z)-octadecenoyl-CoA + cholesterol = cholesteryl (11Z)-octadecenoate + CoA. The catalysed reaction is (7Z)-octadecenoyl-CoA + cholesterol = cholesteryl (7Z)-octadecenoate + CoA. Catalyzes the formation of fatty acid-cholesterol esters, which are less soluble in membranes than cholesterol. Plays a role in lipoprotein assembly and dietary cholesterol absorption. Preferentially utilizes oleoyl-CoA ((9Z)-octadecenoyl-CoA) as a substrate: shows a higher activity towards an acyl-CoA substrate with a double bond at the delta-9 position (9Z) than towards saturated acyl-CoA or an unsaturated acyl-CoA with a double bond at the delta-7 (7Z) or delta-11 (11Z) positions. The protein is Sterol O-acyltransferase 1 of Mus musculus (Mouse).